Here is a 234-residue protein sequence, read N- to C-terminus: Sugar fermentation stimulation protein homolog (234 aa).

The protein belongs to the SfsA family.

The protein is Sugar fermentation stimulation protein homolog of Citrobacter koseri (strain ATCC BAA-895 / CDC 4225-83 / SGSC4696).